The sequence spans 391 residues: 3-ketoacyl-CoA thiolase (391 aa).

Residue C90 is the Acyl-thioester intermediate of the active site. Active-site proton acceptor residues include H347 and C377.

Belongs to the thiolase-like superfamily. Thiolase family.

It catalyses the reaction an acyl-CoA + acetyl-CoA = a 3-oxoacyl-CoA + CoA. Its pathway is lipid metabolism; fatty acid beta-oxidation. Functionally, involved in the degradation of long-chain fatty acids. The polypeptide is 3-ketoacyl-CoA thiolase (fadA) (Bacillus subtilis (strain 168)).